A 232-amino-acid polypeptide reads, in one-letter code: Rhamnogalacturonan acetylesterase RhgT (232 aa).

The active-site Nucleophile is Ser14. Residues Glu191 and His195 contribute to the active site.

It belongs to the 'GDSL' lipolytic enzyme family. As to quaternary structure, monomer.

Almost completely inhibited by diethylpyrocarbonate at 5 mM and completely inhibited by phenylmethylsulfonyl fluoride (PMSF) at 50 mM. Dimethyl phosphite achieves only a 53% inhibition. Also inhibited by metal ions (magnesium, manganese and calcium) and chelating agent (EDTA) at the same level. May play a role in the degradation of type I rhamnogalacturonan derived from plant cell walls. This enzyme has a broad substrate specificity, and shows strong preference for glucose pentaacetate, beta-naphthylacetate, and p-nitrophenyl acetate (pNPA). Also active toward acetylated xylan. In Bacillus subtilis (strain 168), this protein is Rhamnogalacturonan acetylesterase RhgT (rhgT).